Here is a 224-residue protein sequence, read N- to C-terminus: Transcription cofactor HES-6 (224 aa).

Positions methionine 1–proline 31 are disordered. Residues glycine 8–aspartate 25 are compositionally biased toward basic and acidic residues. Residues aspartate 25–valine 77 enclose the bHLH domain. The region spanning phenylalanine 96 to leucine 129 is the Orange domain. Residues aspartate 147 to tryptophan 161 are compositionally biased toward low complexity. The tract at residues aspartate 147–proline 205 is disordered. Positions leucine 181 to glutamate 190 are enriched in acidic residues. A WRPW motif motif is present at residues tryptophan 221–tryptophan 224.

Transcription repression requires formation of a complex with a corepressor protein of the Groucho/TLE family. Interacts with HES1.

It is found in the nucleus. Its function is as follows. Does not bind DNA itself but suppresses both HES1-mediated N box-dependent transcriptional repression and binding of HES1 to E box sequences. Also suppresses HES1-mediated inhibition of the heterodimer formed by ASCL1/MASH1 and TCF3/E47, allowing ASCL1 and TCF3 to up-regulate transcription in its presence. Promotes cell differentiation. This is Transcription cofactor HES-6 from Homo sapiens (Human).